The chain runs to 610 residues: UvrABC system protein C (610 aa).

Positions 16 to 94 (SQPGVYRMYD…IKLYQPRYNV (79 aa)) constitute a GIY-YIG domain. Residues 204–239 (QQVLTQLITRMEEASQQLHFEDAARIRDQIQAVRRV) form the UVR domain.

Belongs to the UvrC family. Interacts with UvrB in an incision complex.

It localises to the cytoplasm. In terms of biological role, the UvrABC repair system catalyzes the recognition and processing of DNA lesions. UvrC both incises the 5' and 3' sides of the lesion. The N-terminal half is responsible for the 3' incision and the C-terminal half is responsible for the 5' incision. The chain is UvrABC system protein C from Yersinia pseudotuberculosis serotype I (strain IP32953).